The chain runs to 189 residues: MAQERRPQRDDRQSREERDSEFVDKLVAINRVAKVVKGGRRFGFAALVVVGDQKGRVGFGHGKAREVPEAIRKATEAAKRELIFVPLRDGRTLHHDVHGRHGAGKVLLRSAKVGTGIIAGGPMRAVFETLGMHDVVAKSTGSSNPYNMVRATFDALKHQVHPKDIAAQRGIKYATLQARRSASGNASEE.

An S5 DRBM domain is found at 22–85; that stretch reads FVDKLVAINR…EAAKRELIFV (64 aa).

Belongs to the universal ribosomal protein uS5 family. In terms of assembly, part of the 30S ribosomal subunit. Contacts proteins S4 and S8.

Its function is as follows. With S4 and S12 plays an important role in translational accuracy. In terms of biological role, located at the back of the 30S subunit body where it stabilizes the conformation of the head with respect to the body. The sequence is that of Small ribosomal subunit protein uS5 from Rhizobium johnstonii (strain DSM 114642 / LMG 32736 / 3841) (Rhizobium leguminosarum bv. viciae).